The following is a 337-amino-acid chain: DNA-directed RNA polymerase subunit alpha (337 aa).

An alpha N-terminal domain (alpha-NTD) region spans residues 1-233; that stretch reads MVREDVVGST…DLLIPFLHAE (233 aa). The alpha C-terminal domain (alpha-CTD) stretch occupies residues 265 to 337; sequence KGIPLTCIFI…FAINLLNKKL (73 aa).

The protein belongs to the RNA polymerase alpha chain family. As to quaternary structure, in plastids the minimal PEP RNA polymerase catalytic core is composed of four subunits: alpha, beta, beta', and beta''. When a (nuclear-encoded) sigma factor is associated with the core the holoenzyme is formed, which can initiate transcription.

Its subcellular location is the plastid. It is found in the chloroplast. The catalysed reaction is RNA(n) + a ribonucleoside 5'-triphosphate = RNA(n+1) + diphosphate. Its function is as follows. DNA-dependent RNA polymerase catalyzes the transcription of DNA into RNA using the four ribonucleoside triphosphates as substrates. The chain is DNA-directed RNA polymerase subunit alpha from Phalaenopsis aphrodite subsp. formosana (Moth orchid).